The primary structure comprises 4062 residues: Transcription-associated protein 1 (4062 aa).

Positions 531–562 are disordered; that stretch reads LASEPSTSEDADESGGDPNKLPPPTKEGKKTS. 2 TPR repeats span residues 1346–1379 and 1677–1714; these read LDGV…LLDI and RRSF…DDEE. The span at 2659-2670 shows a compositional bias: basic and acidic residues; that stretch reads VETEMKREEPEP. The interval 2659–2692 is disordered; the sequence is VETEMKREEPEPMEVDEKDSQDDSKDAGEPKEKE. A compositionally biased stretch (acidic residues) spans 2671–2680; it reads MEVDEKDSQD. Positions 2681 to 2692 are enriched in basic and acidic residues; that stretch reads DSKDAGEPKEKE. Residues 2800–3411 enclose the FAT domain; it reads LIEFISSKHE…FYHIREAVSV (612 aa). The TPR 3 repeat unit spans residues 2847-2880; sequence IETLESLGTLYNEISEFDQFAAIWERRAVFPDTM. A PI3K/PI4K catalytic domain is found at 3682–4046; the sequence is EPNFEIVIKG…DCVSLISRAK (365 aa). The tract at residues 3688–3694 is G-loop; sequence VIKGGQV. The tract at residues 3902-3910 is catalytic loop; that stretch reads NLTPMGPDQ. The tract at residues 3922–3950 is activation loop; sequence NPSYRFEIRGGRSLHDIQHFGHEVPFRLT. Residues 4031–4062 form the FATC domain; that stretch reads AKLRKDDCVSLISRAKDSDNLARMPPTYHAWF.

It belongs to the PI3/PI4-kinase family. TRA1 subfamily. As to quaternary structure, interacts with histone acetyltransferase Tip60 homolog mys-1. Probably a component of a complex with histone acetyltransferase (HAT) activity, at least composed of mys-1 and trr-1. In terms of tissue distribution, expressed in germ cells and somatic cells.

Its subcellular location is the nucleus. It is found in the chromosome. Influences germ cell fate in hermaphrodites. Acts downstream of tra-2 and tra-3 and through the Tip60 histone acetyltransferase complex to regulate germ cell fate decisions. Required for spermatogenesis and embryonic development. Acts with tra-2 to promote expression of fog-3 and control male tail development. Involved in the negative regulation of vulval development. Involved in the positive regulation of transcription factor daf-16, probably acting by histone acetylation; thereby modulating stress resistance. Plays a role in acetylation of nucleosomal histone H4, probably acting as a component of the Tip60 histone acetyltransferase complex. The polypeptide is Transcription-associated protein 1 (Caenorhabditis elegans).